A 109-amino-acid chain; its full sequence is Small ribosomal subunit protein uS15c (109 aa).

Belongs to the universal ribosomal protein uS15 family. In terms of assembly, part of the 30S ribosomal subunit.

Its subcellular location is the plastid. The protein resides in the chloroplast. The protein is Small ribosomal subunit protein uS15c (rps15-A) of Trachelium caeruleum (Blue throatwort).